The following is a 556-amino-acid chain: MKNDIEIAQSAKMEPIINIAKKIGLGEDDIELYGKYKCKISLDAIKKLENNKDGKLVLVTAINPTPAGEGKSTVTVGLGQALNKIGKNTVIALREPSLGPVFGIKGGAAGGGYAQVVPMEDINLHFTGDMHAITSANNLLCAAIDNHIHQGNLLRIDSRRIVFKRVMDMNDRALRNIVVGMGGKINGFLREDGFMITVASEIMAILCMASDLEDLKERMGNILIAYNLDGEPVYAKELEVQGAMALLMKDAIKPNLVQTLENTPAIIHGGPFANIAHGCNSIIATKTALKMSDITITEAGFGADLGAEKFLDIKCRYGNLNPDCVVLVATIRALKHHGGVKKDELNISNVDALNKGMKNLEKQIENIKAYGVPVVVAINKFITDSDEEVKAIEDFCKNIGVEVSLTEVWEKGGEGGIDLANKVIKTMETEPSNFKMIYDSEESIKDKILKIVQTIYGGKGVNYTPQALKQIAEIEKFNLDKLPICMAKTQYSLSDNPSLLGRPENFDITVKEVRVSNGAGFIVVLTGDVMTMPGLPKVPAANRMDIKDNGEIVGLF.

65 to 72 (TPAGEGKS) contacts ATP.

The protein belongs to the formate--tetrahydrofolate ligase family.

It carries out the reaction (6S)-5,6,7,8-tetrahydrofolate + formate + ATP = (6R)-10-formyltetrahydrofolate + ADP + phosphate. Its pathway is one-carbon metabolism; tetrahydrofolate interconversion. The protein is Formate--tetrahydrofolate ligase of Clostridium perfringens (strain 13 / Type A).